The primary structure comprises 333 residues: Holliday junction branch migration complex subunit RuvB (333 aa).

The tract at residues 1–173 (MTAPENLDAA…FGIIEHLEYY (173 aa)) is large ATPase domain (RuvB-L). Residues L11, R12, G53, K56, T57, T58, 120-122 (EDF), R163, Y173, and R210 each bind ATP. T57 contributes to the Mg(2+) binding site. Positions 174–244 (TAEEIATNLL…RAQSALDKLG (71 aa)) are small ATPAse domain (RuvB-S). Residues 247–333 (SAGLDDRDKK…IDDGNGIFLN (87 aa)) are head domain (RuvB-H). The DNA site is built by R302 and R307.

It belongs to the RuvB family. In terms of assembly, homohexamer. Forms an RuvA(8)-RuvB(12)-Holliday junction (HJ) complex. HJ DNA is sandwiched between 2 RuvA tetramers; dsDNA enters through RuvA and exits via RuvB. An RuvB hexamer assembles on each DNA strand where it exits the tetramer. Each RuvB hexamer is contacted by two RuvA subunits (via domain III) on 2 adjacent RuvB subunits; this complex drives branch migration. In the full resolvosome a probable DNA-RuvA(4)-RuvB(12)-RuvC(2) complex forms which resolves the HJ.

It localises to the cytoplasm. It catalyses the reaction ATP + H2O = ADP + phosphate + H(+). Its function is as follows. The RuvA-RuvB-RuvC complex processes Holliday junction (HJ) DNA during genetic recombination and DNA repair, while the RuvA-RuvB complex plays an important role in the rescue of blocked DNA replication forks via replication fork reversal (RFR). RuvA specifically binds to HJ cruciform DNA, conferring on it an open structure. The RuvB hexamer acts as an ATP-dependent pump, pulling dsDNA into and through the RuvAB complex. RuvB forms 2 homohexamers on either side of HJ DNA bound by 1 or 2 RuvA tetramers; 4 subunits per hexamer contact DNA at a time. Coordinated motions by a converter formed by DNA-disengaged RuvB subunits stimulates ATP hydrolysis and nucleotide exchange. Immobilization of the converter enables RuvB to convert the ATP-contained energy into a lever motion, pulling 2 nucleotides of DNA out of the RuvA tetramer per ATP hydrolyzed, thus driving DNA branch migration. The RuvB motors rotate together with the DNA substrate, which together with the progressing nucleotide cycle form the mechanistic basis for DNA recombination by continuous HJ branch migration. Branch migration allows RuvC to scan DNA until it finds its consensus sequence, where it cleaves and resolves cruciform DNA. This is Holliday junction branch migration complex subunit RuvB from Deinococcus radiodurans (strain ATCC 13939 / DSM 20539 / JCM 16871 / CCUG 27074 / LMG 4051 / NBRC 15346 / NCIMB 9279 / VKM B-1422 / R1).